The following is a 558-amino-acid chain: CTP synthase (558 aa).

The tract at residues 1-266 (MSAKYIFVTG…DRLVMKYLRL (266 aa)) is amidoligase domain. Residue S14 coordinates CTP. Residue S14 participates in UTP binding. ATP contacts are provided by residues 15–20 (SLGKGL) and D72. Mg(2+) is bound by residues D72 and E140. CTP contacts are provided by residues 147–149 (DIE), 187–192 (KTKPTQ), and K223. Residues 187 to 192 (KTKPTQ) and K223 contribute to the UTP site. ATP is bound at residue 239–241 (KDV). In terms of domain architecture, Glutamine amidotransferase type-1 spans 291 to 537 (IIGIIGKYVE…IGASYEHRMK (247 aa)). Residue G355 coordinates L-glutamine. C382 serves as the catalytic Nucleophile; for glutamine hydrolysis. L-glutamine contacts are provided by residues 383 to 386 (LGMQ), E406, and R463. Active-site residues include H510 and E512. Residues 539–558 (THTKEREEESVFLRPERVGK) are disordered. Positions 542 to 558 (KEREEESVFLRPERVGK) are enriched in basic and acidic residues.

This sequence belongs to the CTP synthase family. As to quaternary structure, homotetramer.

The enzyme catalyses UTP + L-glutamine + ATP + H2O = CTP + L-glutamate + ADP + phosphate + 2 H(+). It carries out the reaction L-glutamine + H2O = L-glutamate + NH4(+). It catalyses the reaction UTP + NH4(+) + ATP = CTP + ADP + phosphate + 2 H(+). It participates in pyrimidine metabolism; CTP biosynthesis via de novo pathway; CTP from UDP: step 2/2. With respect to regulation, allosterically activated by GTP, when glutamine is the substrate; GTP has no effect on the reaction when ammonia is the substrate. The allosteric effector GTP functions by stabilizing the protein conformation that binds the tetrahedral intermediate(s) formed during glutamine hydrolysis. Inhibited by the product CTP, via allosteric rather than competitive inhibition. Catalyzes the ATP-dependent amination of UTP to CTP with either L-glutamine or ammonia as the source of nitrogen. Regulates intracellular CTP levels through interactions with the four ribonucleotide triphosphates. The chain is CTP synthase from Koribacter versatilis (strain Ellin345).